A 261-amino-acid chain; its full sequence is Small ribosomal subunit protein eS4 (261 aa).

The region spanning 42 to 104 is the S4 RNA-binding domain; sequence LPLVIFLRNR…TGEFFRLIYD (63 aa).

The protein belongs to the eukaryotic ribosomal protein eS4 family.

This is Small ribosomal subunit protein eS4 (RpS4) from Carabus granulatus (Ground beetle).